A 245-amino-acid polypeptide reads, in one-letter code: Small ribosomal subunit protein uS2 (245 aa).

This sequence belongs to the universal ribosomal protein uS2 family.

The protein is Small ribosomal subunit protein uS2 of Pseudomonas putida (strain ATCC 47054 / DSM 6125 / CFBP 8728 / NCIMB 11950 / KT2440).